Here is a 257-residue protein sequence, read N- to C-terminus: Pantothenate synthetase (257 aa).

Position 29 to 36 (29 to 36) interacts with ATP; it reads MGNLHAGH. Catalysis depends on His36, which acts as the Proton donor. Gln60 lines the (R)-pantoate pocket. Gln60 contributes to the beta-alanine binding site. Residue 145–148 coordinates ATP; that stretch reads GEKD. Gln151 provides a ligand contact to (R)-pantoate. ATP contacts are provided by residues Val174 and 182–185; that span reads LSSR.

The protein belongs to the pantothenate synthetase family. As to quaternary structure, homodimer.

The protein localises to the cytoplasm. The catalysed reaction is (R)-pantoate + beta-alanine + ATP = (R)-pantothenate + AMP + diphosphate + H(+). The protein operates within cofactor biosynthesis; (R)-pantothenate biosynthesis; (R)-pantothenate from (R)-pantoate and beta-alanine: step 1/1. Its function is as follows. Catalyzes the condensation of pantoate with beta-alanine in an ATP-dependent reaction via a pantoyl-adenylate intermediate. This is Pantothenate synthetase from Coxiella burnetii (strain CbuK_Q154) (Coxiella burnetii (strain Q154)).